A 399-amino-acid polypeptide reads, in one-letter code: Elongation factor Tu (399 aa).

Residues K10 to E208 enclose the tr-type G domain. The segment at G19–T26 is G1. Position 19 to 26 (G19 to T26) interacts with GTP. Mg(2+) is bound at residue T26. The G2 stretch occupies residues G64–N68. The interval D85–G88 is G3. Residues D85 to H89 and N140 to D143 contribute to the GTP site. A G4 region spans residues N140–D143. The segment at S178–L180 is G5.

This sequence belongs to the TRAFAC class translation factor GTPase superfamily. Classic translation factor GTPase family. EF-Tu/EF-1A subfamily. As to quaternary structure, monomer.

It localises to the cytoplasm. It catalyses the reaction GTP + H2O = GDP + phosphate + H(+). GTP hydrolase that promotes the GTP-dependent binding of aminoacyl-tRNA to the A-site of ribosomes during protein biosynthesis. In Streptococcus pyogenes serotype M12 (strain MGAS2096), this protein is Elongation factor Tu.